Here is a 201-residue protein sequence, read N- to C-terminus: Elongation factor Ts (201 aa).

Positions 83 to 86 (TDFV) are involved in Mg(2+) ion dislocation from EF-Tu.

It belongs to the EF-Ts family.

It localises to the cytoplasm. In terms of biological role, associates with the EF-Tu.GDP complex and induces the exchange of GDP to GTP. It remains bound to the aminoacyl-tRNA.EF-Tu.GTP complex up to the GTP hydrolysis stage on the ribosome. The polypeptide is Elongation factor Ts (Methylacidiphilum infernorum (isolate V4) (Methylokorus infernorum (strain V4))).